The chain runs to 382 residues: Mannitol-1-phosphate 5-dehydrogenase (382 aa).

Residue 3–14 participates in NAD(+) binding; the sequence is ALHFGAGNIGRG. Lys269 carries the N6-acetyllysine modification.

Belongs to the mannitol dehydrogenase family.

It carries out the reaction D-mannitol 1-phosphate + NAD(+) = beta-D-fructose 6-phosphate + NADH + H(+). The polypeptide is Mannitol-1-phosphate 5-dehydrogenase (Escherichia coli O139:H28 (strain E24377A / ETEC)).